Reading from the N-terminus, the 150-residue chain is MGIEIQTKPFGKMQVSERQILSFPEGLLGFEEYKKFALIEEEEESVFKWLQSTEEVDLAFVVIPPSLFKKEYKPLIPEQELLGIGINEIKESLTLVIVTVPGEDPSMMTANTQGPILINKETLIGKQFISRNESHSVREKILESAAVEIG.

It belongs to the FliW family. In terms of assembly, interacts with translational regulator CsrA and flagellin(s).

It is found in the cytoplasm. Functionally, acts as an anti-CsrA protein, binds CsrA and prevents it from repressing translation of its target genes, one of which is flagellin. Binds to flagellin and participates in the assembly of the flagellum. In Leptospira interrogans serogroup Icterohaemorrhagiae serovar Lai (strain 56601), this protein is Flagellar assembly factor FliW.